We begin with the raw amino-acid sequence, 137 residues long: Putative mucosal pentraxin homolog (137 aa).

Positions Met-1–Ala-137 constitute a Pentraxin (PTX) domain. Residues Glu-73, Asp-75, and Gln-85 each contribute to the Ca(2+) site.

The protein belongs to the pentraxin family. In terms of tissue distribution, not expressed in the intestinal tract including ascending colon, descending colon and rectum. Not expressed in the human colon cancer cell lines HT-29 and CaCo-2.

The chain is Putative mucosal pentraxin homolog (MPTX1) from Homo sapiens (Human).